The chain runs to 705 residues: uncharacterized protein (705 aa).

This is an uncharacterized protein from Acanthamoeba polyphaga (Amoeba).